Here is a 274-residue protein sequence, read N- to C-terminus: Halorhodopsin (274 aa).

Residues 1–21 (MSITSVPGVVDAGVLGAQSAA) constitute a propeptide that is removed on maturation. Topologically, residues 22 to 25 (AVRE) are extracellular. The chain crosses the membrane as a helical span at residues 26–51 (NALLSSSLWVNVALAGIAILVFVYMG). Residues 52–57 (RTIRPG) lie on the Cytoplasmic side of the membrane. A helical transmembrane segment spans residues 58 to 81 (RPRLIWGATLMIPLVSISSYLGLL). Residues 82–105 (SGLTVGMIEMPAGHALAGEMVRSQ) lie on the Extracellular side of the membrane. 3 residues coordinate chloride: Q105, T111, and S115. The helical transmembrane segment at 106–127 (WGRYLTWALSTPMILLALGLLA) threads the bilayer. Residues 128–130 (DVD) are Cytoplasmic-facing. The helical transmembrane segment at 131–154 (LGSLFTVIAADIGMCVTGLAAAMT) threads the bilayer. At 155–157 (TSA) the chain is on the extracellular side. A helical membrane pass occupies residues 158 to 180 (LLFRWAFYAISCAFFVVVLSALV). The Cytoplasmic portion of the chain corresponds to 181-192 (TDWAASASSAGT). A helical membrane pass occupies residues 193 to 216 (AEIFDTLRVLTVVLWLGYPIVWAV). The Extracellular portion of the chain corresponds to 217-226 (GVEGLALVQS). A helical transmembrane segment spans residues 227 to 255 (VGVTSWAYSVLDVFAKYVFAFILLRWVAN). K242 bears the N6-(retinylidene)lysine mark. The Cytoplasmic segment spans residues 256-274 (NERTVAVAGQTLGTMSSDD).

It belongs to the archaeal/bacterial/fungal opsin family. Homotrimer.

It localises to the cell membrane. In terms of biological role, light-driven chloride pump. The protein is Halorhodopsin (hop) of Halobacterium salinarum (strain ATCC 29341 / DSM 671 / R1).